A 361-amino-acid chain; its full sequence is Probable dual-specificity RNA methyltransferase RlmN (361 aa).

The Proton acceptor role is filled by glutamate 91. A Radical SAM core domain is found at 97-329; that stretch reads QHYGLSVCVT…KKKGVNCVVR (233 aa). A disulfide bond links cysteine 104 and cysteine 340. [4Fe-4S] cluster contacts are provided by cysteine 111, cysteine 115, and cysteine 118. S-adenosyl-L-methionine contacts are provided by residues 163–164, serine 195, 218–220, and asparagine 296; these read GE and SLH. Residue cysteine 340 is the S-methylcysteine intermediate of the active site.

It belongs to the radical SAM superfamily. RlmN family. It depends on [4Fe-4S] cluster as a cofactor.

It localises to the cytoplasm. The enzyme catalyses adenosine(2503) in 23S rRNA + 2 reduced [2Fe-2S]-[ferredoxin] + 2 S-adenosyl-L-methionine = 2-methyladenosine(2503) in 23S rRNA + 5'-deoxyadenosine + L-methionine + 2 oxidized [2Fe-2S]-[ferredoxin] + S-adenosyl-L-homocysteine. It carries out the reaction adenosine(37) in tRNA + 2 reduced [2Fe-2S]-[ferredoxin] + 2 S-adenosyl-L-methionine = 2-methyladenosine(37) in tRNA + 5'-deoxyadenosine + L-methionine + 2 oxidized [2Fe-2S]-[ferredoxin] + S-adenosyl-L-homocysteine. In terms of biological role, specifically methylates position 2 of adenine 2503 in 23S rRNA and position 2 of adenine 37 in tRNAs. The polypeptide is Probable dual-specificity RNA methyltransferase RlmN (Streptococcus pneumoniae serotype 4 (strain ATCC BAA-334 / TIGR4)).